The following is a 162-amino-acid chain: D-beta-D-heptose 1-phosphate adenylyltransferase (162 aa).

It carries out the reaction D-glycero-beta-D-manno-heptose 1-phosphate + ATP + H(+) = ADP-D-glycero-beta-D-manno-heptose + diphosphate. Its pathway is nucleotide-sugar biosynthesis; ADP-L-glycero-beta-D-manno-heptose biosynthesis; ADP-L-glycero-beta-D-manno-heptose from D-glycero-beta-D-manno-heptose 7-phosphate: step 3/4. The protein operates within bacterial outer membrane biogenesis; LPS core biosynthesis. Its function is as follows. Catalyzes the ADP transfer from ATP to D-glycero-beta-D-manno-heptose 1-phosphate, yielding ADP-D-glycero-beta-D-manno-heptose. Cannot use GTP, UTP, or CTP as substrate. Is not active against the alpha-anomer substrate. Is also able to catalyze the ADP transfer to beta-glucose 1-phosphate in vitro, yielding ADP-beta-glucose. This Bordetella bronchiseptica (strain ATCC BAA-588 / NCTC 13252 / RB50) (Alcaligenes bronchisepticus) protein is D-beta-D-heptose 1-phosphate adenylyltransferase.